Reading from the N-terminus, the 745-residue chain is Translation initiation factor IF-2 (745 aa).

A disordered region spans residues 1-154 (MSDKPRRDTG…PAARPVVRPR (154 aa)). Residues 36-56 (TGRSPNASTGGNRSAGNQAGN) are compositionally biased toward polar residues. The span at 68-98 (ATTPAPNRNTPPAGARQGGAANARTGTPPVA) shows a compositional bias: low complexity. The span at 99-113 (RGGGGGVTPPTGRGG) shows a compositional bias: gly residues. Residues 114 to 126 (NNPRAARNQPRSR) show a composition bias toward low complexity. Residues 127–138 (QQPEEREREHVL) are compositionally biased toward basic and acidic residues. In terms of domain architecture, tr-type G spans 241-410 (PRPPVVTIMG…LLVADLEDLR (170 aa)). Positions 250–257 (GHVDHGKT) are G1. Residue 250–257 (GHVDHGKT) coordinates GTP. Residues 275 to 279 (GITQH) form a G2 region. Positions 296–299 (DTPG) are G3. GTP contacts are provided by residues 296–300 (DTPGH) and 350–353 (NKID). The interval 350 to 353 (NKID) is G4. Residues 386 to 388 (SAR) form a G5 region.

The protein belongs to the TRAFAC class translation factor GTPase superfamily. Classic translation factor GTPase family. IF-2 subfamily.

Its subcellular location is the cytoplasm. Functionally, one of the essential components for the initiation of protein synthesis. Protects formylmethionyl-tRNA from spontaneous hydrolysis and promotes its binding to the 30S ribosomal subunits. Also involved in the hydrolysis of GTP during the formation of the 70S ribosomal complex. The sequence is that of Translation initiation factor IF-2 from Chloroflexus aurantiacus (strain ATCC 29366 / DSM 635 / J-10-fl).